The sequence spans 1153 residues: Integrin alpha-M (1153 aa).

The first 16 residues, 1-16 (MTLKALLVTALALCHG), serve as a signal peptide directing secretion. Topologically, residues 17-1105 (FNLDTEHPMT…TKVEPYEVHN (1089 aa)) are extracellular. FG-GAP repeat units follow at residues 18–75 (NLDT…RCHP) and 76–135 (IPLQ…RPPQ). An N-linked (GlcNAc...) asparagine glycan is attached at asparagine 58. Residues cysteine 66 and cysteine 73 are joined by a disulfide bond. Residue asparagine 86 is glycosylated (N-linked (GlcNAc...) asparagine). Cysteine 105 and cysteine 123 form a disulfide bridge. One can recognise a VWFA domain in the interval 164–338 (IDFQKMKEFV…QEKIFAIEGT (175 aa)). FG-GAP repeat units follow at residues 339–390 (QTGS…VTFI), 391–442 (NTTR…FGTW), 443–503 (EPHT…RARW), 506–564 (EALL…ASLS), and 569–629 (HRII…FSPK). The N-linked (GlcNAc...) asparagine glycan is linked to asparagine 391. Ca(2+) contacts are provided by aspartate 465, aspartate 467, aspartate 469, asparagine 471, asparagine 473, aspartate 529, asparagine 531, aspartate 533, aspartate 537, aspartate 592, aspartate 596, and aspartate 600. A disulfide bridge links cysteine 654 with cysteine 711. Asparagine 696, asparagine 734, asparagine 772, asparagine 801, asparagine 881, asparagine 907, asparagine 941, asparagine 980, asparagine 994, and asparagine 1022 each carry an N-linked (GlcNAc...) asparagine glycan. A disulfide bridge connects residues cysteine 770 and cysteine 776. Intrachain disulfides connect cysteine 999–cysteine 1023 and cysteine 1028–cysteine 1033. Residues asparagine 1045, asparagine 1051, and asparagine 1076 are each glycosylated (N-linked (GlcNAc...) asparagine). The helical transmembrane segment at 1106–1129 (PVPLIVGSSIGGLVLLALITAGLY) threads the bilayer. Residues 1130 to 1153 (KLGFFKRQYKDMMNEAAPQDAPPQ) are Cytoplasmic-facing. A GFFKR motif motif is present at residues 1132-1136 (GFFKR).

The protein belongs to the integrin alpha chain family. As to quaternary structure, heterodimer of an alpha and a beta subunit. ITGAM associates with ITGB2. Found in a complex with CD177 and ITGB2/CD18. Interacts with JAM3. Interacts with THBD. Interacts with complement factor H/CFH; this interaction mediates adhesion of neutrophils to pathogens leading to pathogen clearance. Interacts with TMEM268; this interaction inhibits ITGAM degradation via the endosome-lysosome pathway. Predominantly expressed in monocytes and granulocytes. Expressed in a subset of peritoneal mast cells. Expressed in microglia (at protein level).

It is found in the cell membrane. Its subcellular location is the membrane raft. Its function is as follows. Integrin ITGAM/ITGB2 is implicated in various adhesive interactions of monocytes, macrophages and granulocytes as well as in mediating the uptake of complement-coated particles and pathogens. It is identical with CR-3, the receptor for the iC3b fragment of the third complement component. It probably recognizes the R-G-D peptide in C3b. Integrin ITGAM/ITGB2 is also a receptor for fibrinogen, factor X and ICAM1. It recognizes P1 and P2 peptides of fibrinogen gamma chain. Regulates neutrophil migration. In association with beta subunit ITGB2/CD18, required for CD177-PRTN3-mediated activation of TNF primed neutrophils. May regulate phagocytosis-induced apoptosis in extravasated neutrophils. May play a role in mast cell development. Required with TYROBP/DAP12 in microglia to control production of microglial superoxide ions which promote the neuronal apoptosis that occurs during brain development. The sequence is that of Integrin alpha-M (Itgam) from Mus musculus (Mouse).